A 422-amino-acid polypeptide reads, in one-letter code: Protein UmuC (422 aa).

The UmuC domain maps to 2–188; it reads FALCDVNAFY…LPVDDVWGIG (187 aa).

It belongs to the DNA polymerase type-Y family.

Its function is as follows. Involved in UV protection and mutation. Poorly processive, error-prone DNA polymerase involved in translesion repair. Essential for induced (or SOS) mutagenesis. Able to replicate DNA across DNA lesions (thymine photodimers and abasic sites, translesion synthesis) in the presence of activated RecA; efficiency is maximal in the presence of the beta sliding-clamp and clamp-loading complex of DNA polymerase III plus single-stranded binding protein (SSB). RecA and to a lesser extent the beta clamp-complex may target Pol V to replication complexes stalled at DNA template lesions. The sequence is that of Protein UmuC (umuC) from Escherichia coli (strain K12).